A 447-amino-acid polypeptide reads, in one-letter code: Protein odr-4 homolog (447 aa).

A run of 2 helical transmembrane segments spans residues 82-102 (MLPGGLVVLGIFIITTLELAD) and 425-445 (IGVIAALAVAVLAAGISFHYF).

This sequence belongs to the ODR-4 family. In terms of tissue distribution, ubiquitously expressed.

The protein resides in the membrane. Functionally, may play a role in the trafficking of a subset of G-protein coupled receptors. The polypeptide is Protein odr-4 homolog (Odr4) (Mus musculus (Mouse)).